The following is a 189-amino-acid chain: Probable UbiX-like flavin prenyltransferase (189 aa).

FMN-binding positions include 9 to 11, serine 36, 87 to 90, and arginine 122; these read GAS and SMKT.

It belongs to the UbiX/PAD1 family. YclB subfamily. In terms of assembly, homododecamer.

It catalyses the reaction dimethylallyl phosphate + FMNH2 = prenylated FMNH2 + phosphate. Involved in the non-oxidative decarboxylation and detoxification of phenolic derivatives under anaerobic conditions. Flavin prenyltransferase that catalyzes the synthesis of the prenylated FMN cofactor (prenyl-FMN) for phenolic acid decarboxylase. This is Probable UbiX-like flavin prenyltransferase from Sedimentibacter hydroxybenzoicus (Clostridium hydroxybenzoicum).